Consider the following 154-residue polypeptide: 6,7-dimethyl-8-ribityllumazine synthase (154 aa).

5-amino-6-(D-ribitylamino)uracil-binding positions include Phe22, 56–58 (AFE), and 80–82 (AVI). 85–86 (ST) provides a ligand contact to (2S)-2-hydroxy-3-oxobutyl phosphate. The active-site Proton donor is His88. Residue Phe113 participates in 5-amino-6-(D-ribitylamino)uracil binding. Arg127 contacts (2S)-2-hydroxy-3-oxobutyl phosphate.

Belongs to the DMRL synthase family.

It carries out the reaction (2S)-2-hydroxy-3-oxobutyl phosphate + 5-amino-6-(D-ribitylamino)uracil = 6,7-dimethyl-8-(1-D-ribityl)lumazine + phosphate + 2 H2O + H(+). It participates in cofactor biosynthesis; riboflavin biosynthesis; riboflavin from 2-hydroxy-3-oxobutyl phosphate and 5-amino-6-(D-ribitylamino)uracil: step 1/2. In terms of biological role, catalyzes the formation of 6,7-dimethyl-8-ribityllumazine by condensation of 5-amino-6-(D-ribitylamino)uracil with 3,4-dihydroxy-2-butanone 4-phosphate. This is the penultimate step in the biosynthesis of riboflavin. This chain is 6,7-dimethyl-8-ribityllumazine synthase, found in Clostridium kluyveri (strain NBRC 12016).